The following is a 1157-amino-acid chain: Cyclin-dependent kinase 12 (1157 aa).

A disordered region spans residues 15–540 (SDVSSEDFSD…RSPTSRDLKH (526 aa)). Over residues 18–32 (SSEDFSDQEAGDLDA) the composition is skewed to acidic residues. Residues 55–76 (GRLDAKPDKEGYDNYRSRRAED) show a composition bias toward basic and acidic residues. Polar residues predominate over residues 85–94 (SRQTSSSEAT). T106 is modified (phosphothreonine). Residues 134–162 (RQKRKKQKKEKHKHKSKKKSKKRKKKRAK) are compositionally biased toward basic residues. Over residues 163-176 (SYSSIDSMSDNDIN) the composition is skewed to low complexity. T184 is subject to Phosphothreonine. Over residues 189–215 (PSKSNERTVSAAPSSFTPHNLKESSSP) the composition is skewed to polar residues. Phosphoserine occurs at positions 190 and 192. T217 is subject to Phosphothreonine. Residues 224–255 (PNTNSNYYGESSLETANSALGSNLQVTVTNKQ) show a composition bias toward polar residues. Residues 256–281 (SISNRLRSPPPSSRSSGNGPRFGNSP) are compositionally biased toward low complexity. At S280 the chain carries Phosphoserine. T283 is modified (phosphothreonine). Phosphoserine is present on residues S291, S301, and S314. The span at 315–332 (PHKEDVSAHHRSSHDHGY) shows a compositional bias: basic and acidic residues. The residue at position 353 (S353) is a Phosphoserine. T365 carries the phosphothreonine modification. Residues 392–403 (GKYERYSRDRYS) show a composition bias toward basic and acidic residues. Positions 408-422 (RSPSVQHSRSRQSPS) are enriched in low complexity. Positions 444–468 (TTVSSTPSHTTRTSKRASGTGTSGD) are enriched in polar residues. Positions 473–484 (SPRTSSRYMESS) are enriched in low complexity. S487 and S492 each carry phosphoserine. Basic residues predominate over residues 495–508 (HHYHHRRSPRMRQR). A compositionally biased stretch (low complexity) spans 518 to 533 (PSSASSESSASRSRSP). Position 553 is a phosphoserine (S553). Disordered regions lie at residues 574–661 (ERQE…ADVP) and 675–782 (PFSA…QRPV). The segment covering 586 to 603 (GALTINDNSSSVDGNTPN) has biased composition (polar residues). The segment covering 609 to 623 (SAPGSGTPAAASTTS) has biased composition (low complexity). Composition is skewed to polar residues over residues 644–656 (NKQN…NPAS) and 721–731 (VTSSGSANKSV). Phosphoserine occurs at positions 730, 743, 747, and 755. The segment covering 746–760 (LSGDDDVIDSPEDFD) has biased composition (acidic residues). In terms of domain architecture, Protein kinase spans 804–1098 (FEMIAQIGEG…AEDALRSPWL (295 aa)). ATP contacts are provided by residues 810–818 (IGEGTYGQV), K833, and 891–896 (EYMDHD). D936 serves as the catalytic Proton acceptor. H1118 contacts ATP.

It belongs to the protein kinase superfamily. CMGC Ser/Thr protein kinase family. CDC2/CDKX subfamily. As to quaternary structure, interacts with cyclin CycK.

It is found in the nucleus. The protein localises to the chromosome. The catalysed reaction is [DNA-directed RNA polymerase] + ATP = phospho-[DNA-directed RNA polymerase] + ADP + H(+). It carries out the reaction L-seryl-[protein] + ATP = O-phospho-L-seryl-[protein] + ADP + H(+). The enzyme catalyses L-threonyl-[protein] + ATP = O-phospho-L-threonyl-[protein] + ADP + H(+). Functionally, cyclin-dependent kinase which displays CTD kinase activity: hyperphosphorylates the C-terminal heptapeptide repeat domain (CTD) of the largest RNA polymerase II subunit, thereby acting as a key regulator of transcription elongation. The protein is Cyclin-dependent kinase 12 (Cdk12) of Drosophila melanogaster (Fruit fly).